The following is a 430-amino-acid chain: Enolase (430 aa).

Q168 contributes to the (2R)-2-phosphoglycerate binding site. E210 (proton donor) is an active-site residue. Residues D247, E288, and D315 each contribute to the Mg(2+) site. (2R)-2-phosphoglycerate is bound by residues K340, R369, S370, and K391. K340 acts as the Proton acceptor in catalysis.

Belongs to the enolase family. It depends on Mg(2+) as a cofactor.

Its subcellular location is the cytoplasm. It localises to the secreted. The protein localises to the cell surface. The enzyme catalyses (2R)-2-phosphoglycerate = phosphoenolpyruvate + H2O. Its pathway is carbohydrate degradation; glycolysis; pyruvate from D-glyceraldehyde 3-phosphate: step 4/5. In terms of biological role, catalyzes the reversible conversion of 2-phosphoglycerate (2-PG) into phosphoenolpyruvate (PEP). It is essential for the degradation of carbohydrates via glycolysis. The chain is Enolase from Rippkaea orientalis (strain PCC 8801 / RF-1) (Cyanothece sp. (strain PCC 8801)).